The following is an 874-amino-acid chain: Alanine--tRNA ligase (874 aa).

Residues His-564, His-568, Cys-665, and His-669 each contribute to the Zn(2+) site.

This sequence belongs to the class-II aminoacyl-tRNA synthetase family. The cofactor is Zn(2+).

Its subcellular location is the cytoplasm. The catalysed reaction is tRNA(Ala) + L-alanine + ATP = L-alanyl-tRNA(Ala) + AMP + diphosphate. In terms of biological role, catalyzes the attachment of alanine to tRNA(Ala) in a two-step reaction: alanine is first activated by ATP to form Ala-AMP and then transferred to the acceptor end of tRNA(Ala). Also edits incorrectly charged Ser-tRNA(Ala) and Gly-tRNA(Ala) via its editing domain. In Burkholderia orbicola (strain MC0-3), this protein is Alanine--tRNA ligase.